Consider the following 524-residue polypeptide: Peptide chain release factor 3 (524 aa).

One can recognise a tr-type G domain in the interval 10–278 (DSRRTFAIIS…TFLQFAPAPH (269 aa)). GTP is bound by residues 19-26 (SHPDAGKT), 87-91 (DTPGH), and 141-144 (NKLD).

It belongs to the TRAFAC class translation factor GTPase superfamily. Classic translation factor GTPase family. PrfC subfamily.

Its subcellular location is the cytoplasm. Functionally, increases the formation of ribosomal termination complexes and stimulates activities of RF-1 and RF-2. It binds guanine nucleotides and has strong preference for UGA stop codons. It may interact directly with the ribosome. The stimulation of RF-1 and RF-2 is significantly reduced by GTP and GDP, but not by GMP. The polypeptide is Peptide chain release factor 3 (Enterococcus faecalis (strain ATCC 700802 / V583)).